We begin with the raw amino-acid sequence, 423 residues long: Glutamate-1-semialdehyde 2,1-aminomutase (423 aa).

Residue Lys262 is modified to N6-(pyridoxal phosphate)lysine.

Belongs to the class-III pyridoxal-phosphate-dependent aminotransferase family. HemL subfamily. In terms of assembly, homodimer. Pyridoxal 5'-phosphate serves as cofactor.

The protein resides in the cytoplasm. It carries out the reaction (S)-4-amino-5-oxopentanoate = 5-aminolevulinate. It participates in porphyrin-containing compound metabolism; protoporphyrin-IX biosynthesis; 5-aminolevulinate from L-glutamyl-tRNA(Glu): step 2/2. The chain is Glutamate-1-semialdehyde 2,1-aminomutase from Campylobacter fetus subsp. fetus (strain 82-40).